Consider the following 197-residue polypeptide: MKISKEITIFIVFLTLVVLLGLFTNPLSDIRTPANNELKVGGMNIRFEDGASESEVKAVLENHNMTTNYSIDCNTGSVGNKYYIMVDKDNLDIRRELRKGMEKENKDWIISSSATGIRKGDSYVIAVSEQAVNDEKFLSILNKYDTKVKKFVWCYISFEKPDGSRYWIPEEDAVKMKNELENNESIFTVSIDYINDQ.

This sequence belongs to the UPF0228 family.

The sequence is that of UPF0228 protein MA_3125 from Methanosarcina acetivorans (strain ATCC 35395 / DSM 2834 / JCM 12185 / C2A).